The sequence spans 815 residues: Leucine--tRNA ligase (815 aa).

The 'HIGH' region motif lies at 41–51; the sequence is PYPSGTLHVGH. A 'KMSKS' region motif is present at residues 576-580; sequence KMSKS. Lys-579 is an ATP binding site.

Belongs to the class-I aminoacyl-tRNA synthetase family.

The protein localises to the cytoplasm. It catalyses the reaction tRNA(Leu) + L-leucine + ATP = L-leucyl-tRNA(Leu) + AMP + diphosphate. This is Leucine--tRNA ligase from Pseudothermotoga lettingae (strain ATCC BAA-301 / DSM 14385 / NBRC 107922 / TMO) (Thermotoga lettingae).